Consider the following 284-residue polypeptide: Nucleoid occlusion protein (284 aa).

A DNA-binding region (H-T-H motif) is located at residues 143–162 (EALAQRVGKSQSAIANKMRL).

This sequence belongs to the ParB family.

Its subcellular location is the cytoplasm. The protein resides in the nucleoid. Functionally, effects nucleoid occlusion by binding relatively nonspecifically to DNA and preventing the assembly of the division machinery in the vicinity of the nucleoid, especially under conditions that disturb the cell cycle. It helps to coordinate cell division and chromosome segregation by preventing the formation of the Z ring through the nucleoid, which would cause chromosome breakage. This is Nucleoid occlusion protein from Listeria monocytogenes serovar 1/2a (strain ATCC BAA-679 / EGD-e).